Reading from the N-terminus, the 120-residue chain is Small ribosomal subunit protein bS6 (120 aa).

The segment covering 97 to 112 (SNEPSPILKNQSTENT) has biased composition (polar residues). The interval 97 to 120 (SNEPSPILKNQSTENTPVIDVTAN) is disordered.

It belongs to the bacterial ribosomal protein bS6 family.

In terms of biological role, binds together with bS18 to 16S ribosomal RNA. The chain is Small ribosomal subunit protein bS6 from Rickettsia bellii (strain RML369-C).